Here is a 547-residue protein sequence, read N- to C-terminus: (E)-beta-caryophyllene synthase (547 aa).

Residues Asp-302 and Asp-306 each contribute to the Mg(2+) site. The substrate site is built by Asp-302, Asp-306, Arg-443, and Asn-446. The short motif at 302 to 306 (DDLYD) is the DDXXD motif element. Residues Asn-446 and Glu-454 each contribute to the Mg(2+) site.

The protein belongs to the terpene synthase family. As to quaternary structure, monomer. Mg(2+) serves as cofactor. It depends on Mn(2+) as a cofactor.

The protein resides in the cytoplasm. It carries out the reaction (2E,6E)-farnesyl diphosphate = (-)-(E)-beta-caryophyllene + diphosphate. It participates in secondary metabolite biosynthesis; terpenoid biosynthesis. In terms of biological role, component of the volatile terpenes biosynthesis pathways. Sesquiterpene synthase that converts farnesyl diphosphate to (E)-beta-caryophyllene. Involved in indirect defense by producing volatile signals attracting natural enemies of herbivores. The sequence is that of (E)-beta-caryophyllene synthase from Zea mays (Maize).